Reading from the N-terminus, the 263-residue chain is Proteasome subunit beta type-4 (263 aa).

Residue Met-1 is modified to N-acetylmethionine. Positions Met-1–Arg-44 are excised as a propeptide. Ser-26 is subject to Phosphoserine. Position 101 is a phosphotyrosine (Tyr-101).

Belongs to the peptidase T1B family. The 26S proteasome consists of a 20S proteasome core and two 19S regulatory subunits. The 20S proteasome core is a barrel-shaped complex made of 28 subunits that are arranged in four stacked rings. The two outer rings are each formed by seven alpha subunits, and the two inner rings are formed by seven beta subunits. The proteolytic activity is exerted by three beta-subunits PSMB5, PSMB6 and PSMB7. Forms a ternary complex with SMAD1 and OAZ1 before PSMB4 is incorporated into the 20S proteasome. Interacts with PRPF19.

It is found in the cytoplasm. The protein resides in the nucleus. Non-catalytic component of the 20S core proteasome complex involved in the proteolytic degradation of most intracellular proteins. This complex plays numerous essential roles within the cell by associating with different regulatory particles. Associated with two 19S regulatory particles, forms the 26S proteasome and thus participates in the ATP-dependent degradation of ubiquitinated proteins. The 26S proteasome plays a key role in the maintenance of protein homeostasis by removing misfolded or damaged proteins that could impair cellular functions, and by removing proteins whose functions are no longer required. Associated with the PA200 or PA28, the 20S proteasome mediates ubiquitin-independent protein degradation. This type of proteolysis is required in several pathways including spermatogenesis (20S-PA200 complex) or generation of a subset of MHC class I-presented antigenic peptides (20S-PA28 complex). SMAD1/OAZ1/PSMB4 complex mediates the degradation of the CREBBP/EP300 repressor SNIP1. The chain is Proteasome subunit beta type-4 (Psmb4) from Rattus norvegicus (Rat).